The sequence spans 192 residues: Signal peptidase complex catalytic subunit sec11 (192 aa).

Residues 1–18 are Cytoplasmic-facing; the sequence is MLSFLSSNLSSTRQSMAQ. A helical; Signal-anchor for type II membrane protein transmembrane segment spans residues 19–39; the sequence is VLNFALVLSTAFMLWKGLSVF. Residues 40–192 are Lumenal-facing; the sequence is TASSSPIVVV…GLMVILQREQ (153 aa). Residues Ser53, His92, and Asp133 each act as charge relay system in the active site. A C-terminal short (CTS) helix region spans residues 177 to 188; that stretch reads VLLGIMGLMVIL.

The protein belongs to the peptidase S26B family. As to quaternary structure, component of the signal peptidase complex (SPC) composed of a catalytic subunit SEC11 and three accessory subunits SPC1, SPC2 and SPC3. The complex induces a local thinning of the ER membrane which is used to measure the length of the signal peptide (SP) h-region of protein substrates. This ensures the selectivity of the complex towards h-regions shorter than 18-20 amino acids. SPC associates with the translocon complex.

It localises to the endoplasmic reticulum membrane. It carries out the reaction Cleavage of hydrophobic, N-terminal signal or leader sequences from secreted and periplasmic proteins.. In terms of biological role, catalytic component of the signal peptidase complex (SPC) which catalyzes the cleavage of N-terminal signal sequences from nascent proteins as they are translocated into the lumen of the endoplasmic reticulum. Specifically cleaves N-terminal signal peptides that contain a hydrophobic alpha-helix (h-region) shorter than 18-20 amino acids. The chain is Signal peptidase complex catalytic subunit sec11 (sec11) from Aspergillus fumigatus (strain CBS 144.89 / FGSC A1163 / CEA10) (Neosartorya fumigata).